The sequence spans 173 residues: Protein TraS (173 aa).

Its subcellular location is the cell inner membrane. Functionally, involved in surface exclusion. This is Protein TraS (traS) from Escherichia coli (strain K12).